A 169-amino-acid polypeptide reads, in one-letter code: Alpha-S2-casein-like B (169 aa).

The signal sequence occupies residues 1 to 15; that stretch reads MKFIILTCLLAVALA.

It belongs to the alpha-casein family. Mammary gland specific. Secreted in milk.

The protein localises to the secreted. In terms of biological role, important role in the capacity of milk to transport calcium phosphate. This chain is Alpha-S2-casein-like B (Csn1s2b), found in Rattus norvegicus (Rat).